The chain runs to 494 residues: Calmodulin-binding protein 60 A (494 aa).

The interval M1 to E62 is calmodulin-binding. Positions V132–N252 are DNA-binding.

The protein belongs to the plant ACBP60 protein family. As to quaternary structure, interacts with calmodulin (CaM). In terms of tissue distribution, expressed in stems, flowers and root.

The protein localises to the nucleus. Its function is as follows. Transcription activator that binds DNA in a sequence-specific manner, likely 5'-GAAATTTTGG-3', to promote the expression of target genes. The chain is Calmodulin-binding protein 60 A from Arabidopsis thaliana (Mouse-ear cress).